Here is a 108-residue protein sequence, read N- to C-terminus: IRALPWDNPAFVAPVLGLLGFIPGGAGGIVNASFTLDYVVHNTAWVPGHFHLQVASLVTLTAMGSLYWLLPNLTGKPISDAQRRLGLAVVWLWFLGMMIMAVGLHWAG.

Residues 10–30 (AFVAPVLGLLGFIPGGAGGIV) traverse the membrane as a helical segment. Residue H49 coordinates heme a3. 2 consecutive transmembrane segments (helical) span residues 50–70 (FHLQ…YWLL) and 85–105 (LGLA…VGLH). H51 is a binding site for Fe(II)-heme a.

This sequence belongs to the heme-copper respiratory oxidase family. Requires heme as cofactor. Cu cation is required as a cofactor.

The protein resides in the cell membrane. It catalyses the reaction 4 Fe(II)-[cytochrome c] + O2 + 8 H(+)(in) = 4 Fe(III)-[cytochrome c] + 2 H2O + 4 H(+)(out). It participates in energy metabolism; oxidative phosphorylation. The sequence is that of Cytochrome c oxidase subunit 1 (cbaA) from Thermus thermophilus.